Reading from the N-terminus, the 360-residue chain is MPKKILFTGGGTVGHVTLNLILIPKFIKDGWEVHYIGDKNGIEHTEIEKSGLDVTFHAIATGKLRRYFSWQNLADVFKVALGLLQSLFIIAKLRPQALFSKGGFVSVPPVVAAKLLGKPVFIHESDRSMGLANKIAYKFATTMYTTFEQEDQLSKVKHLGAVTKVFKDANQMPESTQLEAVKEYFSRDLKTLLFIGGSAGAHVFNQFISDHPELKQRYNIINITGDPHLNELSSHLYRVDYVTDLYQPLMAMADLVVTRGGSNTLFELLAMAKLHLIVPLGKEASRGDQLENATYFEKRGYAKQLQEPDLTLHNFDQAMADLFEHQADYEATMLATKEIQSPDFFYDLLRADISSAIKEK.

Positions 198 and 289 each coordinate UDP-N-acetyl-alpha-D-glucosamine.

The protein belongs to the glycosyltransferase 28 family. MurG subfamily.

Its subcellular location is the cell membrane. It carries out the reaction Mur2Ac(oyl-L-Ala-gamma-D-Glu-L-Lys-D-Ala-D-Ala)-di-trans,octa-cis-undecaprenyl diphosphate + UDP-N-acetyl-alpha-D-glucosamine = beta-D-GlcNAc-(1-&gt;4)-Mur2Ac(oyl-L-Ala-gamma-D-Glu-L-Lys-D-Ala-D-Ala)-di-trans,octa-cis-undecaprenyl diphosphate + UDP + H(+). Its pathway is cell wall biogenesis; peptidoglycan biosynthesis. In terms of biological role, cell wall formation. Catalyzes the transfer of a GlcNAc subunit on undecaprenyl-pyrophosphoryl-MurNAc-pentapeptide (lipid intermediate I) to form undecaprenyl-pyrophosphoryl-MurNAc-(pentapeptide)GlcNAc (lipid intermediate II). The polypeptide is UDP-N-acetylglucosamine--N-acetylmuramyl-(pentapeptide) pyrophosphoryl-undecaprenol N-acetylglucosamine transferase (Streptococcus pyogenes serotype M12 (strain MGAS2096)).